Reading from the N-terminus, the 550-residue chain is Phosphomannomutase (550 aa).

Residue Ser-148 is the Phosphoserine intermediate of the active site. Mg(2+) contacts are provided by Ser-148, Asp-300, Asp-302, and Asp-304.

Belongs to the phosphohexose mutase family. Mg(2+) serves as cofactor.

It carries out the reaction alpha-D-mannose 1-phosphate = D-mannose 6-phosphate. This chain is Phosphomannomutase (manB), found in Mycoplasma genitalium (strain ATCC 33530 / DSM 19775 / NCTC 10195 / G37) (Mycoplasmoides genitalium).